The following is a 368-amino-acid chain: Histidinol-phosphate aminotransferase (368 aa).

K228 is modified (N6-(pyridoxal phosphate)lysine).

The protein belongs to the class-II pyridoxal-phosphate-dependent aminotransferase family. Histidinol-phosphate aminotransferase subfamily. Homodimer. The cofactor is pyridoxal 5'-phosphate.

It catalyses the reaction L-histidinol phosphate + 2-oxoglutarate = 3-(imidazol-4-yl)-2-oxopropyl phosphate + L-glutamate. Its pathway is amino-acid biosynthesis; L-histidine biosynthesis; L-histidine from 5-phospho-alpha-D-ribose 1-diphosphate: step 7/9. The polypeptide is Histidinol-phosphate aminotransferase (hisC) (Methylobacillus flagellatus).